The primary structure comprises 1232 residues: Pyruvate:ferredoxin oxidoreductase (1232 aa).

Thr-31 contacts pyruvate. Glu-64 contacts thiamine diphosphate. Arg-114 contributes to the pyruvate binding site. CoA contacts are provided by residues 427-431, Lys-459, Asn-560, and Asn-602; that span reads ADGTV. 4Fe-4S ferredoxin-type domains are found at residues 680–709 and 736–767; these read NVPQWVPENCIQCNQCAFVCPHSAILPVLA and FRIQINTLDCMGCGNCADICPPKEKALVMQPL. 10 residues coordinate [4Fe-4S] cluster: Cys-689, Cys-692, Cys-695, Cys-699, Cys-745, Cys-748, Cys-751, Cys-755, Cys-812, and Cys-815. Thiamine diphosphate contacts are provided by residues Glu-817, Cys-840, and 962–965; that span reads GDGW. Position 840 (Cys-840) interacts with [4Fe-4S] cluster. Asp-963 lines the Mg(2+) pocket. The Ca(2+) site is built by Asp-983 and Asn-985. Mg(2+)-binding residues include Thr-991 and Val-993. 991 to 996 contributes to the thiamine diphosphate binding site; it reads TEVYSN. Ala-1056, Phe-1059, Gly-1061, and Ser-1063 together coordinate Ca(2+). Cys-1071 serves as a coordination point for [4Fe-4S] cluster. An intrachain disulfide couples Cys-1195 to Cys-1212. Residues 1197–1232 are disordered; sequence RDDTPMMARPDSGEACDQNRAGTSEQQGDLSKRTKK. Residues 1216 to 1225 are compositionally biased toward polar residues; sequence RAGTSEQQGD.

It belongs to the pyruvate:ferredoxin/flavodoxin oxidoreductase family. As to quaternary structure, homodimer. The cofactor is [4Fe-4S] cluster. Thiamine diphosphate serves as cofactor. It depends on Mg(2+) as a cofactor.

The protein localises to the cytoplasm. It catalyses the reaction 2 oxidized [2Fe-2S]-[ferredoxin] + pyruvate + CoA = 2 reduced [2Fe-2S]-[ferredoxin] + acetyl-CoA + CO2 + H(+). Its function is as follows. Catalyzes the ferredoxin-dependent oxidative decarboxylation of pyruvate. Required for the transfer of electrons from pyruvate to ferredoxin. Ferredoxin I and ferredoxin II, which are single 4Fe-4S cluster ferredoxins are the most effective electron carriers of POR. The chain is Pyruvate:ferredoxin oxidoreductase from Desulfocurvibacter africanus (Desulfovibrio africanus).